Consider the following 270-residue polypeptide: Cyclohexanol dehydrogenase (270 aa).

NAD(+) is bound by residues arginine 19, aspartate 40, aspartate 78, valine 79, asparagine 105, tyrosine 176, lysine 180, isoleucine 209, and threonine 211. Tyrosine 176 functions as the Proton acceptor in the catalytic mechanism.

This sequence belongs to the short-chain dehydrogenases/reductases (SDR) family. In terms of assembly, homodimer.

The protein localises to the cytoplasm. The enzyme catalyses cyclohexanol + NAD(+) = cyclohexanone + NADH + H(+). Activity is enhanced by the addition of Ba(2+) and Mg(2+), but inhibited by the addition of Al(3+), Ca(2+), Co(2+), Cu(2+), Mn(2+) and Zn(2+). In terms of biological role, catalyzes the oxidation of cyclohexanol to cyclohexanone. Can also use a broad range of other alcohols, including trans-cyclohexane-1,2-diol, trans-cyclopentane-1,2-diol, cyclopentanol, hexane-1,2-diol, ethanol, 1-propanol, 1-butanol, 1-pentanol and 1-hexanol. This chain is Cyclohexanol dehydrogenase, found in Rhodococcus sp. (strain TK6).